The primary structure comprises 193 residues: MDIILLERIPRLGQMGDIVSVKDGYARNFLLPQGKALRANDANKKHFEKQRAQLKARNLERKSEAQKIAEKLDGKSFIVVRSAGETGQLYGSVSTRDISEIITSAGFSIGRNQIELNHPIKTIGLYLITLSLHPEVQISVVINVARSASEAQRQAEGETLTSAEAIYDIQEKPLAENQEEMNDNDANSINEQA.

The disordered stretch occupies residues 155-193; sequence AEGETLTSAEAIYDIQEKPLAENQEEMNDNDANSINEQA. Positions 184–193 are enriched in polar residues; it reads NDANSINEQA.

Belongs to the bacterial ribosomal protein bL9 family.

In terms of biological role, binds to the 23S rRNA. The polypeptide is Large ribosomal subunit protein bL9 (Bartonella quintana (strain Toulouse) (Rochalimaea quintana)).